Here is a 386-residue protein sequence, read N- to C-terminus: Leupaxin (386 aa).

Position 1 is an N-acetylmethionine (methionine 1). The LD motif 1 motif lies at 3-15 (ELDALLEELERST). Residues 12–51 (ERSTLQDSDEYSNSAPLPLDQSSRKESNLDETSKMLSVQD) form a disordered region. Over residues 16-26 (LQDSDEYSNSA) the composition is skewed to polar residues. Serine 19 is subject to Phosphoserine. Residue tyrosine 22 is modified to Phosphotyrosine. A compositionally biased stretch (basic and acidic residues) spans 33–44 (SSRKESNLDETS). Tyrosine 62 is modified (phosphotyrosine). Short sequence motifs (LD motif) lie at residues 70–82 (NVYS…KKSP) and 92–103 (QLDELMAHLSEM). Tyrosine 72 is modified (phosphotyrosine; by LYN). Residue serine 81 is modified to Phosphoserine. 4 consecutive LIM zinc-binding domains span residues 150–209 (GHCA…LFSP), 210–267 (RCAY…AMFS), 268–327 (PKCG…RRGT), and 328–386 (LCHG…LFSL).

The protein belongs to the paxillin family. Interacts with unphosphorylated ITGA4. Interacts with AR and SRF. Interacts with PTK2B/PYK2, PTPN22 and PTPN12. Interacts (via LD motif 3) with LYN and the interaction is induced upon B-cell antigen receptor (BCR) activation. Interacts (via LD motif 3) with PTK2/FAK. Post-translationally, phosphorylated on tyrosine residues. Phosphorylation on Tyr-72 is important for its inhibitory function. Bombesin stimulates phosphorylation on Tyr-22, Tyr-62 and Tyr-72.

The protein localises to the cytoplasm. The protein resides in the cell junction. Its subcellular location is the focal adhesion. It is found in the nucleus. It localises to the perinuclear region. The protein localises to the cell projection. The protein resides in the podosome. Its subcellular location is the cell membrane. Its function is as follows. Transcriptional coactivator for androgen receptor (AR) and serum response factor (SRF). Contributes to the regulation of cell adhesion, spreading and cell migration and acts as a negative regulator in integrin-mediated cell adhesion events. Suppresses the integrin-induced tyrosine phosphorylation of paxillin (PXN). May play a critical role as an adapter protein in the formation of the adhesion zone in osteoclasts. Negatively regulates B-cell antigen receptor (BCR) signaling. The chain is Leupaxin (LPXN) from Oryctolagus cuniculus (Rabbit).